The following is a 283-amino-acid chain: Flagellar filament 35 kDa core protein (283 aa).

Belongs to the bacterial flagellin family. As to quaternary structure, the flagellum consists of two outer layers around a core that contains several antigenically related polypeptides.

Its subcellular location is the periplasmic flagellum. It is found in the periplasm. Component of the core of the flagella. This is Flagellar filament 35 kDa core protein (flaB) from Leptospira interrogans serogroup Icterohaemorrhagiae serovar Lai (strain 56601).